We begin with the raw amino-acid sequence, 625 residues long: Chaperone protein HtpG (625 aa).

Residues 1–332 form an a; substrate-binding region; it reads MSNKQNTAVQ…TEDLSLNVSR (332 aa). Residues 333 to 545 are b; it reads EIVQSSPVMS…KDAMDSQMER (213 aa). The c stretch occupies residues 546 to 625; it reads MMKMMQQEMP…ELIEAATLSR (80 aa).

The protein belongs to the heat shock protein 90 family. In terms of assembly, homodimer.

The protein resides in the cytoplasm. Its function is as follows. Molecular chaperone. Has ATPase activity. The sequence is that of Chaperone protein HtpG from Chlorobium luteolum (strain DSM 273 / BCRC 81028 / 2530) (Pelodictyon luteolum).